Reading from the N-terminus, the 546-residue chain is Protein HydE (546 aa).

The polypeptide is Protein HydE (hydE) (Wolinella succinogenes (strain ATCC 29543 / DSM 1740 / CCUG 13145 / JCM 31913 / LMG 7466 / NCTC 11488 / FDC 602W) (Vibrio succinogenes)).